The primary structure comprises 361 residues: POU domain, class 3, transcription factor 4 (361 aa).

Disordered regions lie at residues 99 to 131 (PHVAHHSPHTNHPNAWGASPAPNSSITSSGQPL) and 144 to 192 (MLEH…PTSD). A compositionally biased stretch (polar residues) spans 119–131 (APNSSITSSGQPL). Basic and acidic residues predominate over residues 165–183 (VLREPPDHGELGSHHCQDH). Positions 186–260 (EETPTSDELE…LLNKWLEEAD (75 aa)) constitute a POU-specific domain. Residue serine 265 is modified to Phosphoserine. A DNA-binding region (homeobox) is located at residues 278 to 337 (KRKKRTSIEVSVKGVLETHFLKCPKPAAQEISSLADSLQLEKEVVRVWFCNRRQKEKRMT). The segment at 334–361 (KRMTPPGDQQPHEVYSHTVKTDASCHDL) is disordered. Positions 343-361 (QPHEVYSHTVKTDASCHDL) are enriched in basic and acidic residues.

Belongs to the POU transcription factor family. Class-3 subfamily. As to quaternary structure, interacts with HNRNPU. Brain specific.

The protein localises to the nucleus. Probable transcription factor which exert its primary action widely during early neural development and in a very limited set of neurons in the mature brain. The protein is POU domain, class 3, transcription factor 4 (Pou3f4) of Mus musculus (Mouse).